We begin with the raw amino-acid sequence, 510 residues long: Acyl-CoA desaturase 1 (510 aa).

The Cytoplasmic portion of the chain corresponds to 1 to 112 (MPTSGTTIEL…TLNNWHQHLN (112 aa)). The chain crosses the membrane as a helical span at residues 113–133 (WLNMVLVCGMPMIGWYFALSG). Residues 134–138 (KVPLH) are Lumenal-facing. The helical transmembrane segment at 139 to 159 (LNVFLFSVFYYAVGGVSITAG) threads the bilayer. Over 160-255 (YHRLWSHRSY…DWTIRFQHRH (96 aa)) the chain is Cytoplasmic. Residues His161, His166, His198, His201, and His202 each coordinate Fe cation. The Histidine box-1 motif lies at 161–166 (HRLWSH). The Histidine box-2 motif lies at 198–202 (HRIHH). A helical membrane pass occupies residues 256–276 (YILLMLLTAFVIPTLICGYFF). Over 277-280 (NDYM) the chain is Lumenal. The chain crosses the membrane as a helical span at residues 281-301 (GGLIYAGFIRVFVIQQATFCI). The Cytoplasmic segment spans residues 302–510 (NSLAHYIGTQ…GEIYETGKFF (209 aa)). Fe cation is bound by residues His306, His335, His338, and His339. The short motif at 335 to 339 (HNFHH) is the Histidine box-3 element. One can recognise a Cytochrome b5 heme-binding domain in the interval 409 to 487 (LPMWDKQTFL…LADMRVAVIK (79 aa)). Residues His444 and His470 each contribute to the heme site.

It belongs to the fatty acid desaturase type 1 family. Requires Fe(2+) as cofactor.

The protein resides in the endoplasmic reticulum membrane. The catalysed reaction is octadecanoyl-CoA + 2 Fe(II)-[cytochrome b5] + O2 + 2 H(+) = (9Z)-octadecenoyl-CoA + 2 Fe(III)-[cytochrome b5] + 2 H2O. The enzyme catalyses hexadecanoyl-CoA + 2 Fe(II)-[cytochrome b5] + O2 + 2 H(+) = (9Z)-hexadecenoyl-CoA + 2 Fe(III)-[cytochrome b5] + 2 H2O. In terms of biological role, stearoyl-CoA desaturase that utilizes O(2) and electrons from reduced cytochrome b5 to introduce the first double bond into saturated fatty acyl-CoA substrates. Catalyzes the insertion of a cis double bond at the delta-9 position into fatty acyl-CoA substrates including palmitoyl-CoA and stearoyl-CoA. Required for the biosynthesis of membrane phospholipids, cholesterol esters and triglycerides. Regulates fatty acid desaturation, that is, the ratio of unsaturated versus saturated fatty acyl chains, by competing with the acyltransferase STC1 for the common substrate C16:0-CoA. SCT1 sequesters C16:0-CoA into lipids, thereby shielding it from desaturation by OLE1. The chain is Acyl-CoA desaturase 1 (OLE1) from Saccharomyces cerevisiae (strain ATCC 204508 / S288c) (Baker's yeast).